Reading from the N-terminus, the 285-residue chain is Probable endonuclease 4 (285 aa).

Residues H67, H107, E144, D178, H181, H215, D228, H230, and E260 each coordinate Zn(2+).

It belongs to the AP endonuclease 2 family. The cofactor is Zn(2+).

The catalysed reaction is Endonucleolytic cleavage to 5'-phosphooligonucleotide end-products.. In terms of biological role, endonuclease IV plays a role in DNA repair. It cleaves phosphodiester bonds at apurinic or apyrimidinic (AP) sites, generating a 3'-hydroxyl group and a 5'-terminal sugar phosphate. In Chloroflexus aurantiacus (strain ATCC 29366 / DSM 635 / J-10-fl), this protein is Probable endonuclease 4.